Here is a 408-residue protein sequence, read N- to C-terminus: Succinylornithine transaminase (408 aa).

Lysine 252 bears the N6-(pyridoxal phosphate)lysine mark.

Belongs to the class-III pyridoxal-phosphate-dependent aminotransferase family. AstC subfamily. The cofactor is pyridoxal 5'-phosphate.

It carries out the reaction N(2)-succinyl-L-ornithine + 2-oxoglutarate = N-succinyl-L-glutamate 5-semialdehyde + L-glutamate. It functions in the pathway amino-acid degradation; L-arginine degradation via AST pathway; L-glutamate and succinate from L-arginine: step 3/5. Catalyzes the transamination of N(2)-succinylornithine and alpha-ketoglutarate into N(2)-succinylglutamate semialdehyde and glutamate. Can also act as an acetylornithine aminotransferase. The sequence is that of Succinylornithine transaminase from Salmonella typhimurium (strain LT2 / SGSC1412 / ATCC 700720).